Consider the following 300-residue polypeptide: Tyrosine recombinase XerC (300 aa).

In terms of domain architecture, Core-binding (CB) spans Thr-2 to Leu-88. The Tyr recombinase domain maps to Arg-109–Met-294. Active-site residues include Arg-150, Lys-174, His-246, Arg-249, and His-272. The O-(3'-phospho-DNA)-tyrosine intermediate role is filled by Tyr-281.

It belongs to the 'phage' integrase family. XerC subfamily. In terms of assembly, forms a cyclic heterotetrameric complex composed of two molecules of XerC and two molecules of XerD.

The protein resides in the cytoplasm. In terms of biological role, site-specific tyrosine recombinase, which acts by catalyzing the cutting and rejoining of the recombining DNA molecules. The XerC-XerD complex is essential to convert dimers of the bacterial chromosome into monomers to permit their segregation at cell division. It also contributes to the segregational stability of plasmids. This Listeria monocytogenes serotype 4a (strain HCC23) protein is Tyrosine recombinase XerC.